Here is a 391-residue protein sequence, read N- to C-terminus: Zinc finger protein ubi-d4 (391 aa).

Position 2 is an N-acetylalanine (Ala-2). Residues Lys-10, Lys-99, Lys-107, and Lys-108 each participate in a glycyl lysine isopeptide (Lys-Gly) (interchain with G-Cter in SUMO2) cross-link. Disordered regions lie at residues 79 to 147 and 165 to 199; these read WRKK…GEFP and DDLD…KLDA. Composition is skewed to basic and acidic residues over residues 100–110 and 126–140; these read PDTDQTLKKEG and DPLE…RVDD. Phosphoserine is present on Ser-142. Over residues 165 to 174 the composition is skewed to acidic residues; that stretch reads DDLDDEDYEE. Phosphotyrosine is present on Tyr-172. At Thr-176 the chain carries Phosphothreonine. Residues Lys-178 and Lys-196 each participate in a glycyl lysine isopeptide (Lys-Gly) (interchain with G-Cter in SUMO2) cross-link. Ser-200 is subject to Phosphoserine. The C2H2-type zinc finger occupies 209–232; the sequence is YACDICGKRYKNRPGLSYHYAHSH. Positions 233–266 are disordered; it reads LAEEEGEDKEDSRPPTPVSQRSEEQKSKKGPDGL. Ser-244 carries the phosphoserine modification. Over residues 253–263 the composition is skewed to basic and acidic residues; that stretch reads RSEEQKSKKGP. PHD-type zinc fingers lie at residues 270-330 and 327-377; these read NNYC…CKCC and CKCC…CLDL. Ser-280 carries the phosphoserine modification. Lys-281 is covalently cross-linked (Glycyl lysine isopeptide (Lys-Gly) (interchain with G-Cter in SUMO2)).

The protein belongs to the requiem/DPF family. In terms of assembly, interacts with the nucleosomes, in particular nucleosomes bearing histone H3 crotonylated at 'Lys-14' (H3K14cr) for which DPF2 has high affinity. Also interacts (via PHD-type zinc finger domains) with histone H3 butyrylated at 'Lys-14' (H3K14bu), histone H3 propionylated at 'Lys-14' (H3K14pr), and histone H3 acetylated at 'Lys-14' (H3K14ac). Interacts with histone H3 acetylated at 'Lys-9' (H3K9ac), histone H3 di-methylated at 'Lys-9' (H3K9me2), and histone H3 tri-methylated at 'Lys-9' (H3K9me3). Interacts with histone H4 acetylated at 'Lys-12' (H4K12ac). Interacts with histone H4 acetylated at 'Lys-16' (H4K16ac). Interacts with SWI/SNF complex components. Interacts with SMARCA2, SMARCA4, SMARCB1 and SMARCD1. Interacts with SMARCC1, SMARCC2 and ACTL6A. Interacts with RUNX1. In embryo, highest levels are seen in brain, eyes, thymus and olfactory epithelium in nose, whereas several other tissues, including the musculoskeletal system, show moderate expression. In adult, higher expression in testis, medium in thymus and spleen, lower in certain parts of the brain as the hippocampus. No expression in adult heart, lung, liver, duodenum and kidney.

Its subcellular location is the nucleus. The protein resides in the cytoplasm. Plays an active role in transcriptional regulation by binding modified histones H3 and H4. Is a negative regulator of myeloid differentiation of hematopoietic progenitor cells. Might also have a role in the development and maturation of lymphoid cells. Involved in the regulation of non-canonical NF-kappa-B pathway. In Mus musculus (Mouse), this protein is Zinc finger protein ubi-d4 (Dpf2).